The sequence spans 755 residues: Beta-galactosidase (755 aa).

Glu382 (proton donor) is an active-site residue. The active-site Nucleophile is Glu463.

The protein belongs to the glycosyl hydrolase 2 family.

It catalyses the reaction Hydrolysis of terminal non-reducing beta-D-galactose residues in beta-D-galactosides.. This Rhizobium meliloti (Ensifer meliloti) protein is Beta-galactosidase (lacZ).